A 323-amino-acid chain; its full sequence is Vertebrate ancient opsin (323 aa).

The Extracellular segment spans residues 1–38 (MDTLRIAVNGVSYNEASEIYKPHADPFTGPITNLAPWN). Residues 39–63 (FAVLATLMFVITSLSLFENFTVMLA) form a helical membrane-spanning segment. At 64 to 75 (TYKFKQLRQPLN) the chain is on the cytoplasmic side. Residues 76 to 100 (YIIVNLSLADFLVSLTGGTISFLTN) form a helical membrane-spanning segment. Topologically, residues 101–115 (ARGYFFLGNWACVLE) are extracellular. Residues C112 and C189 are joined by a disulfide bond. The chain crosses the membrane as a helical span at residues 116–135 (GFAVTYFGIVAMWSLAVLSF). The Cytoplasmic segment spans residues 136–154 (ERYFVICRPLGNVRLRGKH). Residues 155–178 (AALGLLFVWTFSFIWTIPPVFGWC) traverse the membrane as a helical segment. Residues 179–202 (SYTVSKIGTTCEPNWYSNNIWNHT) are Extracellular-facing. An N-linked (GlcNAc...) asparagine glycan is attached at N200. Residues 203 to 230 (YIITFFVTCFIMPLGMIIYCYGKLLQKL) form a helical membrane-spanning segment. Residues 231-250 (RKVSHDRLGNAKKPERQVSR) are Cytoplasmic-facing. A helical membrane pass occupies residues 251–274 (MVVVMIVAYLVGWTPYAAFSIIVT). Residues 275-282 (ACPTIYLD) are Extracellular-facing. A helical transmembrane segment spans residues 283-307 (PRLAAAPAFFSKTAAVYNPVIYVFM). K294 is modified (N6-(retinylidene)lysine). Over 308 to 323 (NKQVSTQLNWGFWSRA) the chain is Cytoplasmic.

It belongs to the G-protein coupled receptor 1 family. Opsin subfamily. Phosphorylated on some or all of the serine and threonine residues present in the C-terminal region.

The protein localises to the membrane. The polypeptide is Vertebrate ancient opsin (Salmo salar (Atlantic salmon)).